A 284-amino-acid polypeptide reads, in one-letter code: RNase adapter protein RapZ (284 aa).

Residue 8-15 (GRSGSGKS) coordinates ATP. 56–59 (DVRN) is a binding site for GTP. The interval 266–284 (RSRGKNVQSRHRTLEKRKT) is RNA-binding.

The protein belongs to the RapZ-like family. RapZ subfamily. As to quaternary structure, homotrimer.

Functionally, modulates the synthesis of GlmS, by affecting the processing and stability of the regulatory small RNA GlmZ. When glucosamine-6-phosphate (GlcN6P) concentrations are high in the cell, RapZ binds GlmZ and targets it to cleavage by RNase E. Consequently, GlmZ is inactivated and unable to activate GlmS synthesis. Under low GlcN6P concentrations, RapZ is sequestered and inactivated by an other regulatory small RNA, GlmY, preventing GlmZ degradation and leading to synthesis of GlmS. In Salmonella typhimurium (strain LT2 / SGSC1412 / ATCC 700720), this protein is RNase adapter protein RapZ.